We begin with the raw amino-acid sequence, 177 residues long: Disulfide bond formation protein B (177 aa).

The Cytoplasmic segment spans residues 1–14 (MLALLKQFSEKRFV). A helical membrane pass occupies residues 15–31 (WFLLAFSSLALESTALY). Residues 32–49 (FQYGMGLQPCVLCVYERL) lie on the Periplasmic side of the membrane. Cys41 and Cys44 are oxidised to a cystine. A helical transmembrane segment spans residues 50-65 (AMIGLFVAGIIALLQP). At 66–72 (LAFILRL) the chain is on the cytoplasmic side. The chain crosses the membrane as a helical span at residues 73–90 (IALALGLFSSIKGLLISF). The Periplasmic segment spans residues 91-145 (RHLDLQMNPAPWKQCEFIPNFPETLPFHQWFPFIFNPTGSCNESQWSLFGLTMVQ). Cys105 and Cys131 are oxidised to a cystine. Residues 146–164 (WLVVIFSLYVVILTLLLIA) traverse the membrane as a helical segment. Residues 165-177 (QVIKTRKQRRLFN) lie on the Cytoplasmic side of the membrane.

The protein belongs to the DsbB family.

The protein localises to the cell inner membrane. Its function is as follows. Required for disulfide bond formation in some periplasmic proteins. Acts by oxidizing the DsbA protein. This Haemophilus influenzae (strain 86-028NP) protein is Disulfide bond formation protein B.